We begin with the raw amino-acid sequence, 320 residues long: Tyrosine phosphatase H3 (320 aa).

Positions 22–309 constitute a Tyrosine-protein phosphatase domain; the sequence is NFWEFVRLEH…AFCYKAVRYA (288 aa). Cys250 acts as the Phosphocysteine intermediate in catalysis.

This sequence belongs to the protein-tyrosine phosphatase family.

It catalyses the reaction O-phospho-L-tyrosyl-[protein] + H2O = L-tyrosyl-[protein] + phosphate. Its function is as follows. Suppresses host immune cell adhesion and phagocytosis. The polypeptide is Tyrosine phosphatase H3 (H3) (Microplitis demolitor (Parasitoid wasp)).